The following is a 214-amino-acid chain: Transmembrane emp24 domain-containing protein p24delta9 (214 aa).

Positions 1–24 (MFLRSLNLCTILLFLAISSQVSQS) are cleaved as a signal peptide. Over 25 to 181 (LHFELQSGRT…QNLNRATNSK (157 aa)) the chain is Lumenal. Residues 34 to 149 (TKCISEDIKS…VEVMEFDVKR (116 aa)) enclose the GOLD domain. Residues 164–177 (LREREEEMQNLNRA) adopt a coiled-coil conformation. The residue at position 167 (R167) is an Omega-N-methylated arginine. Residues 182 to 202 (MAWLSFLSLFVCLGVAGMQFV) form a helical membrane-spanning segment. The Cytoplasmic segment spans residues 203-214 (HLKTFFEKKKVI). The COPII vesicle coat-binding motif lies at 207–208 (FF). Positions 207–214 (FFEKKKVI) match the COPI vesicle coat-binding motif.

The protein belongs to the EMP24/GP25L family. In terms of assembly, probably oligomerizes with other members of the EMP24/GP25L family. Associates with the COPI vesicle coat (coatomer). Associates with the COPII vesicle coat (coatomer).

The protein resides in the endoplasmic reticulum membrane. It localises to the golgi apparatus. Its subcellular location is the cis-Golgi network membrane. The protein localises to the golgi stack membrane. In terms of biological role, involved in vesicular protein trafficking. Mainly functions in the early secretory pathway. Thought to act as cargo receptor at the lumenal side for incorporation of secretory cargo molecules into transport vesicles and to be involved in vesicle coat formation at the cytoplasmic side. The polypeptide is Transmembrane emp24 domain-containing protein p24delta9 (Arabidopsis thaliana (Mouse-ear cress)).